A 725-amino-acid chain; its full sequence is Aminopeptidase RNPEPL1 (725 aa).

Residue 326 to 330 participates in substrate binding; it reads VAMEN. Position 353 (His353) interacts with Zn(2+). Glu354 acts as the Proton acceptor in catalysis. His357 and Glu376 together coordinate Zn(2+). The disordered stretch occupies residues 676–699; sequence GLGSSTEPASEPSTELGKAEADTD. Residues 679-690 show a composition bias toward low complexity; sequence SSTEPASEPSTE.

This sequence belongs to the peptidase M1 family. Zn(2+) serves as cofactor. As to expression, ubiquitously expressed. Expressed at relatively higher levels in heart and skeletal muscle.

The catalysed reaction is Release of N-terminal amino acids, preferentially methionine, from peptides and arylamides.. With respect to regulation, inhibited by calcium but not affected by chloride ions. Inhibited by amastatin and to a lower extent by bestatin. Weakly inhibited by puromycin. Broad specificity aminopeptidase which preferentially hydrolyzes an N-terminal methionine, citrulline or glutamine. This chain is Aminopeptidase RNPEPL1, found in Homo sapiens (Human).